The sequence spans 393 residues: Zinc finger CCCH domain-containing protein 2 (393 aa).

Residues 1-71 are disordered; the sequence is MDVVCTEHQM…NRENKEYCYD (71 aa). A compositionally biased stretch (low complexity) spans 20–37; that stretch reads RKLLLSSKSFPSDSSSPR. Over residues 60-69 the composition is skewed to basic and acidic residues; sequence DNNRENKEYC. C3H1-type zinc fingers lie at residues 122–150 and 159–181; these read QYSG…HGVF and YRTE…AHSP.

As to quaternary structure, interacts with MARD1/FLZ9 and RD21A. Specifically expressed in seeds.

The protein resides in the nucleus. Functionally, probable transcription repressor that functions as a negative regulator of phytochrome-mediated promotion of seed germination. Inhibits seed germination by regulating the expression of gibberellic acid (GA) and abscisic acid (ABA) metabolic genes. Does not regulate the expression of the DELLA genes RGA and RGA1. Activated by PIL5, a phytochrome-interacting basic helix-loop-helix transcription factor. Represses directly JMJ20 and JMJ22 expression in the absence of red light (R) and in far-red (FR) conditions. This is Zinc finger CCCH domain-containing protein 2 from Arabidopsis thaliana (Mouse-ear cress).